The chain runs to 164 residues: R-phycoerythrin alpha chain (164 aa).

(2R,3E)-phycoerythrobilin is bound by residues cysteine 82 and cysteine 139.

It belongs to the phycobiliprotein family. In terms of assembly, heterodimer of an alpha and a beta chain. Contains two covalently linked bilin chromophores.

Its subcellular location is the plastid. The protein resides in the chloroplast thylakoid membrane. Light-harvesting photosynthetic bile pigment-protein from the phycobiliprotein complex. The sequence is that of R-phycoerythrin alpha chain (cpeA) from Lophosiphonia boldii (Red alga).